The sequence spans 434 residues: Indole diterpene prenyltransferase nodD2 (434 aa).

Residues 85–86 (LI) and Glu94 each bind L-tryptophan. 9 residues coordinate substrate: Arg107, Lys194, Arg268, Lys270, Tyr272, Gln351, Tyr353, Tyr418, and Tyr422.

This sequence belongs to the tryptophan dimethylallyltransferase family.

The protein operates within secondary metabolite biosynthesis. Indole diterpene prenyltransferase; part of the gene cluster that mediates the biosynthesis of the indole diterpenes nodulisporic acids (NA). Nodulisporic acid A (NAA) and its chemically modified derivatives are of particular significance because of their highly potent insecticidal activity against blood-feeding arthropods and lack of observable adverse effects on mammals, in particular the tremogenicity associated with the paspaline-derived IDTs is not observed. The geranylgeranyl diphosphate (GGPP) synthase ggs1, localized outside of the cluster, is proposed to catalyze the first step in nodulisporic acid biosynthesis via conversion of farnesyl pyrophosphate and isopentyl pyrophosphate into geranylgeranyl pyrophosphate (GGPP). Condensation of indole-3-glycerol phosphate with GGPP by the prenyl transferase nodC then forms 3-geranylgeranylindole (3-GGI). Epoxidation by the FAD-dependent monooxygenase nodM leads to a single-epoxidized-GGI that is substrate of the terpene cyclase nodB for cyclization to yield emindole SB. The terminal methyl carbon, C28, of emindole SB is then oxidized by the cytochrome P450 monooxygenase nodW to produce nodulisporic acid F (NAF), the pentacyclic core of NAA. NAF is converted to nodulisporic acid E (NAE) via prenylation. This step is probably performed by one of the indole diterpene prenyltransferases nodD1 or nodD2. Several oxidation steps performed by the FAD-linked oxidoreductase nodO and one of the cytochrome P450 monooxygenase nodR, nodX or nodZ further convert NAE to nodulisporic acid D (NAD). NAD is substrate of cytochrome P450 monooxygenase nodJ to produce the precursor of nodulisporic acid C (NAC), converted to NAC by one of the indole diterpene prenyltransferases nodD1 or nodD2. The FAD-dependent monooxygenase nodY2 then oxidizes NAC to nodulisporic acid B (NAB). Finally NAB is converted to NAA by one of the cytochrome P450 monooxygenases nodR, nodX or nodZ. The polypeptide is Indole diterpene prenyltransferase nodD2 (Hypoxylon pulicicidum).